A 455-amino-acid polypeptide reads, in one-letter code: Acetylcholinesterase collagenic tail peptide (455 aa).

A signal peptide spans 1–22; it reads MVVLNPMTLGIYLQLFFLSIVS. The tract at residues 51 to 67 is PRAD; sequence CCLLTPPPPPLFPPPFF. The disordered stretch occupies residues 90–282; the sequence is QSPCMQGSLG…QLIMGPKGER (193 aa). Collagen-like domains are found at residues 96 to 269 and 277 to 291; these read GSLG…PGPP and GPKGERGFPGPPGRC. Pro residues predominate over residues 101 to 112; the sequence is PGPPGPQGPPGL. Positions 118–127 are enriched in basic and acidic residues; that stretch reads PKGEKGELGR. Residues 130-133 are heparan sulfate proteoglycan binding; sequence RKGR. Residues 134–152 show a composition bias toward pro residues; that stretch reads PGPPGVPGMPGPIGWPGPE. The segment covering 182-200 has biased composition (basic and acidic residues); it reads RGEKGSRGEKGDLGPKGEK. The heparan sulfate proteoglycan binding stretch occupies residues 235-238; it reads KRGK. A compositionally biased stretch (pro residues) spans 262–271; it reads RPGPPGPPPA.

The protein belongs to the COLQ family. In terms of assembly, homotrimer. Component of the asymmetric form of AChE, a disulfide-bonded oligomer composed of the collagenic subunits (Q) and a variable number of asymmetric catalytic subunits (T). The N-terminal of a collagenic subunit (Q) associates with the C-terminal of a catalytic subunit (T). The triple-helical tail is stabilized by disulfide bonds at each end. Found at the end plate of skeletal muscle.

The protein resides in the synapse. Functionally, anchors the catalytic subunits of asymmetric AChE to the synaptic basal lamina. The polypeptide is Acetylcholinesterase collagenic tail peptide (COLQ) (Homo sapiens (Human)).